Reading from the N-terminus, the 427-residue chain is Histidinol dehydrogenase (427 aa).

Residues Tyr-123, Gln-185, and Asn-208 each contribute to the NAD(+) site. Residues Ser-231, Gln-253, and His-256 each coordinate substrate. Positions 253 and 256 each coordinate Zn(2+). Residues Glu-321 and His-322 each act as proton acceptor in the active site. Positions 322, 355, 409, and 414 each coordinate substrate. Zn(2+) is bound at residue Asp-355. Residue His-414 participates in Zn(2+) binding.

This sequence belongs to the histidinol dehydrogenase family. It depends on Zn(2+) as a cofactor.

It catalyses the reaction L-histidinol + 2 NAD(+) + H2O = L-histidine + 2 NADH + 3 H(+). It functions in the pathway amino-acid biosynthesis; L-histidine biosynthesis; L-histidine from 5-phospho-alpha-D-ribose 1-diphosphate: step 9/9. Catalyzes the sequential NAD-dependent oxidations of L-histidinol to L-histidinaldehyde and then to L-histidine. This Bacillus subtilis (strain 168) protein is Histidinol dehydrogenase (hisD).